Here is a 247-residue protein sequence, read N- to C-terminus: Carboxy-S-adenosyl-L-methionine synthase (247 aa).

S-adenosyl-L-methionine-binding positions include tyrosine 40, 65–67, 90–91, 122–123, asparagine 137, and arginine 204; these read GSS, DN, and DI.

The protein belongs to the class I-like SAM-binding methyltransferase superfamily. Cx-SAM synthase family. As to quaternary structure, homodimer.

It carries out the reaction prephenate + S-adenosyl-L-methionine = carboxy-S-adenosyl-L-methionine + 3-phenylpyruvate + H2O. In terms of biological role, catalyzes the conversion of S-adenosyl-L-methionine (SAM) to carboxy-S-adenosyl-L-methionine (Cx-SAM). In Pseudomonas syringae pv. syringae (strain B728a), this protein is Carboxy-S-adenosyl-L-methionine synthase.